Consider the following 376-residue polypeptide: Chaperone protein DnaJ (376 aa).

Positions 5-70 constitute a J domain; the sequence is DYYEVLGVGR…DKKAAYDQFG (66 aa). The CR-type zinc-finger motif lies at 132-210; sequence GLTKELRIPT…CHGDGRVEKS (79 aa). Positions 145, 148, 162, 165, 184, 187, 198, and 201 each coordinate Zn(2+). CXXCXGXG motif repeat units follow at residues 145-152, 162-169, 184-191, and 198-205; these read CDLCDGSG, CTTCHGQG, CPTCHGRG, and CTKCHGDG.

Belongs to the DnaJ family. In terms of assembly, homodimer. It depends on Zn(2+) as a cofactor.

The protein resides in the cytoplasm. Functionally, participates actively in the response to hyperosmotic and heat shock by preventing the aggregation of stress-denatured proteins and by disaggregating proteins, also in an autonomous, DnaK-independent fashion. Unfolded proteins bind initially to DnaJ; upon interaction with the DnaJ-bound protein, DnaK hydrolyzes its bound ATP, resulting in the formation of a stable complex. GrpE releases ADP from DnaK; ATP binding to DnaK triggers the release of the substrate protein, thus completing the reaction cycle. Several rounds of ATP-dependent interactions between DnaJ, DnaK and GrpE are required for fully efficient folding. Also involved, together with DnaK and GrpE, in the DNA replication of plasmids through activation of initiation proteins. This is Chaperone protein DnaJ from Shewanella putrefaciens (strain CN-32 / ATCC BAA-453).